We begin with the raw amino-acid sequence, 248 residues long: 3-deoxy-manno-octulosonate cytidylyltransferase (248 aa).

Belongs to the KdsB family.

It localises to the cytoplasm. The catalysed reaction is 3-deoxy-alpha-D-manno-oct-2-ulosonate + CTP = CMP-3-deoxy-beta-D-manno-octulosonate + diphosphate. The protein operates within nucleotide-sugar biosynthesis; CMP-3-deoxy-D-manno-octulosonate biosynthesis; CMP-3-deoxy-D-manno-octulosonate from 3-deoxy-D-manno-octulosonate and CTP: step 1/1. Its pathway is bacterial outer membrane biogenesis; lipopolysaccharide biosynthesis. In terms of biological role, activates KDO (a required 8-carbon sugar) for incorporation into bacterial lipopolysaccharide in Gram-negative bacteria. The sequence is that of 3-deoxy-manno-octulosonate cytidylyltransferase from Salmonella arizonae (strain ATCC BAA-731 / CDC346-86 / RSK2980).